The primary structure comprises 126 residues: Protein ApaG (126 aa).

The 125-residue stretch at 2 to 126 (SDPRYQIDVS…FRLAVPGALH (125 aa)) folds into the ApaG domain.

The polypeptide is Protein ApaG (Ectopseudomonas mendocina (strain ymp) (Pseudomonas mendocina)).